The chain runs to 851 residues: DNA mismatch repair protein MutS (851 aa).

614–621 serves as a coordination point for ATP; the sequence is GPNMGGKS.

The protein belongs to the DNA mismatch repair MutS family.

Functionally, this protein is involved in the repair of mismatches in DNA. It is possible that it carries out the mismatch recognition step. This protein has a weak ATPase activity. The polypeptide is DNA mismatch repair protein MutS (Yersinia pseudotuberculosis serotype O:1b (strain IP 31758)).